Here is a 488-residue protein sequence, read N- to C-terminus: MSFNHKTIEELHDLLVAKEISATELTQKTLEDIKSREEAVGSFITVSEEAALKQAAAIDAKGIDSDNLMSGIPLAVKDNISTKGILTTAASKMLYNYEPIFDATSVANAYAKDMIVIGKTNMDEFAMGGSTETSYFKKTKNAWDHTKVPGGSSGGSATAVASGQVRLSLGSDTGGSIRQPAAFNGVVGLKPTYGTVSRYGLIAFGSSLDQIGPFAPTVKENAQLLNVVASSDVKDATSAPVRIADYTSKIGRDIKGMKIALPKEYLGEGIDPEIKETVLAAAKQFEALGATVEEVSLPHSKYGVAVYYIIASSEASSNLQRFDGIRYGFRADDAKNLDEIYVNTRSQGFGDEVKRRIMLGTFSLSSGYYDAYFKKAGQVRTLIIEDFDKVFADYDLILGPTTPTVAFGLDTLNHDPVAMYLADLLTIPVNLAGLPGISIPAGFVDGLPVGLQLIGPKYTEETIYQAAAAFEAVTDYHKQQPIIFGGDK.

Residues K77 and S152 each act as charge relay system in the active site. S176 serves as the catalytic Acyl-ester intermediate.

Belongs to the amidase family. GatA subfamily. In terms of assembly, heterotrimer of A, B and C subunits.

It catalyses the reaction L-glutamyl-tRNA(Gln) + L-glutamine + ATP + H2O = L-glutaminyl-tRNA(Gln) + L-glutamate + ADP + phosphate + H(+). Functionally, allows the formation of correctly charged Gln-tRNA(Gln) through the transamidation of misacylated Glu-tRNA(Gln) in organisms which lack glutaminyl-tRNA synthetase. The reaction takes place in the presence of glutamine and ATP through an activated gamma-phospho-Glu-tRNA(Gln). The chain is Glutamyl-tRNA(Gln) amidotransferase subunit A from Streptococcus pyogenes serotype M3 (strain ATCC BAA-595 / MGAS315).